Here is a 572-residue protein sequence, read N- to C-terminus: Capsid vertex component 2 (572 aa).

The interval 1–58 (MFRPRFEPMNLPKDSNKPSTLMVLADRLNFISCAEGSSKYASKLFEGTLIDAEIMTNR) is interaction with major capsid protein/MCP.

The protein belongs to the herpesviridae CVC2 protein family. As to quaternary structure, heterodimerizes with CVC1. Interacts with major capsid protein/MCP and triplex capsid protein 1/TRX1 at the pentamer vertices. Interacts with the large tegument protein/LTP.

It localises to the virion. The protein localises to the host nucleus. Its function is as follows. Capsid vertex-specific component that plays a role during viral DNA encapsidation, assuring correct genome cleavage and presumably stabilizing capsids that contain full-length viral genomes. Participates in the interaction between the capsid and the tegument through interaction with the large tegument protein/LTP. In Infectious laryngotracheitis virus (strain Thorne V882) (ILTV), this protein is Capsid vertex component 2.